We begin with the raw amino-acid sequence, 296 residues long: Ribosomal protein L11 methyltransferase (296 aa).

The S-adenosyl-L-methionine site is built by threonine 145, glycine 166, aspartate 188, and asparagine 230.

This sequence belongs to the methyltransferase superfamily. PrmA family.

Its subcellular location is the cytoplasm. The catalysed reaction is L-lysyl-[protein] + 3 S-adenosyl-L-methionine = N(6),N(6),N(6)-trimethyl-L-lysyl-[protein] + 3 S-adenosyl-L-homocysteine + 3 H(+). Functionally, methylates ribosomal protein L11. In Photorhabdus laumondii subsp. laumondii (strain DSM 15139 / CIP 105565 / TT01) (Photorhabdus luminescens subsp. laumondii), this protein is Ribosomal protein L11 methyltransferase.